The following is a 245-amino-acid chain: 1-(5-phosphoribosyl)-5-[(5-phosphoribosylamino)methylideneamino] imidazole-4-carboxamide isomerase (245 aa).

The Proton acceptor role is filled by Asp8. Asp129 functions as the Proton donor in the catalytic mechanism.

It belongs to the HisA/HisF family.

It is found in the cytoplasm. The catalysed reaction is 1-(5-phospho-beta-D-ribosyl)-5-[(5-phospho-beta-D-ribosylamino)methylideneamino]imidazole-4-carboxamide = 5-[(5-phospho-1-deoxy-D-ribulos-1-ylimino)methylamino]-1-(5-phospho-beta-D-ribosyl)imidazole-4-carboxamide. It functions in the pathway amino-acid biosynthesis; L-histidine biosynthesis; L-histidine from 5-phospho-alpha-D-ribose 1-diphosphate: step 4/9. This chain is 1-(5-phosphoribosyl)-5-[(5-phosphoribosylamino)methylideneamino] imidazole-4-carboxamide isomerase, found in Rhodopseudomonas palustris (strain BisA53).